A 684-amino-acid polypeptide reads, in one-letter code: Protein ecdysoneless (684 aa).

Positions glutamate 491–proline 501 are enriched in acidic residues. Disordered stretches follow at residues glutamate 491 to asparagine 528 and threonine 603 to phenylalanine 624.

Belongs to the ECD family. In terms of tissue distribution, expressed in the ecdysone-producing larval ring gland, nervous system, imaginal disks and gonads.

The protein localises to the cytoplasm. Functionally, required in both the follicle cells and the germline for oocyte development. The polypeptide is Protein ecdysoneless (Drosophila melanogaster (Fruit fly)).